The sequence spans 624 residues: ABC transporter G family member 23 (624 aa).

The region spanning 52–296 (LTVTNLSYTI…IAKLGFQIPE (245 aa)) is the ABC transporter domain. 84–91 (GPSGTGKS) is an ATP binding site. The region spanning 350–560 (TEISYLCSRF…PLESMVVNEY (211 aa)) is the ABC transmembrane type-2 domain. 6 consecutive transmembrane segments (helical) span residues 369–389 (LFLA…SVYT), 402–422 (LGLF…ALPI), 450–470 (IAFV…VYWI), 480–500 (FSFF…LVLF), 511–531 (GNSL…YFIP), and 595–615 (INVG…WGIL).

Belongs to the ABC transporter superfamily. ABCG family. Eye pigment precursor importer (TC 3.A.1.204) subfamily.

Its subcellular location is the membrane. The chain is ABC transporter G family member 23 (ABCG23) from Arabidopsis thaliana (Mouse-ear cress).